Consider the following 438-residue polypeptide: Nudix hydrolase 19, chloroplastic (438 aa).

A chloroplast-targeting transit peptide spans methionine 1–methionine 36. Residues cysteine 212, cysteine 215, cysteine 230, and cysteine 235 each coordinate Zn(2+). Residues tyrosine 240, alanine 276–phenylalanine 278, glutamate 292, glutamate 296, and glutamate 342 contribute to the substrate site. One can recognise a Nudix hydrolase domain in the interval proline 241–alanine 371. Positions 276, 292, 296, and 342 each coordinate Mg(2+). The Nudix box motif lies at glycine 277–glycine 298. The Microbody targeting signal motif lies at proline 422–aspartate 424.

It belongs to the Nudix hydrolase family. NudC subfamily. Mg(2+) serves as cofactor. Requires Zn(2+) as cofactor. As to expression, expressed in roots, leaves, stems and inflorescences.

Its subcellular location is the plastid. The protein localises to the chloroplast. The catalysed reaction is a 5'-end NAD(+)-phospho-ribonucleoside in mRNA + H2O = a 5'-end phospho-adenosine-phospho-ribonucleoside in mRNA + beta-nicotinamide D-ribonucleotide + 2 H(+). It carries out the reaction NAD(+) + H2O = beta-nicotinamide D-ribonucleotide + AMP + 2 H(+). The enzyme catalyses NADH + H2O = reduced beta-nicotinamide D-ribonucleotide + AMP + 2 H(+). MRNA decapping enzyme that specifically removes the nicotinamide adenine dinucleotide (NAD) cap from a subset of mRNAs by hydrolyzing the diphosphate linkage to produce nicotinamide mononucleotide (NMN) and 5' monophosphate mRNA. The NAD-cap is present at the 5'-end of some RNAs; in contrast to the canonical N7 methylguanosine (m7G) cap, the NAD cap promotes mRNA decay. Mediates the hydrolysis of some nucleoside diphosphate derivatives. Has a high affinity for NADPH compared with that for NADH. The polypeptide is Nudix hydrolase 19, chloroplastic (NUDT19) (Arabidopsis thaliana (Mouse-ear cress)).